We begin with the raw amino-acid sequence, 452 residues long: Chloride/fluoride channel protein (452 aa).

10 helical membrane passes run 23-43, 57-77, 97-117, 160-180, 188-208, 222-242, 264-284, 315-337, 344-364, and 386-408; these read WLAL…LFLL, WVIW…HLIG, IVPL…HLFG, FASV…VLAI, LFPC…WGVV, LWSV…GLLF, PFAG…NHYI, VFTV…FYIG, LAPL…VAVF, and IAPL…GIYH.

Belongs to the chloride channel (TC 2.A.49) family.

It is found in the cell membrane. In terms of biological role, transports chloride and fluoride with similar efficiency. The chain is Chloride/fluoride channel protein (eriC) from Pseudomonas syringae pv. tomato (strain ATCC BAA-871 / DC3000).